Reading from the N-terminus, the 125-residue chain is Large ribosomal subunit protein bL12 (125 aa).

This sequence belongs to the bacterial ribosomal protein bL12 family. In terms of assembly, homodimer. Part of the ribosomal stalk of the 50S ribosomal subunit. Forms a multimeric L10(L12)X complex, where L10 forms an elongated spine to which 2 to 4 L12 dimers bind in a sequential fashion. Binds GTP-bound translation factors.

Functionally, forms part of the ribosomal stalk which helps the ribosome interact with GTP-bound translation factors. Is thus essential for accurate translation. The protein is Large ribosomal subunit protein bL12 of Nitrobacter winogradskyi (strain ATCC 25391 / DSM 10237 / CIP 104748 / NCIMB 11846 / Nb-255).